Reading from the N-terminus, the 133-residue chain is Small ribosomal subunit protein uS8 (133 aa).

The protein belongs to the universal ribosomal protein uS8 family. In terms of assembly, part of the 30S ribosomal subunit. Contacts proteins S5 and S12.

In terms of biological role, one of the primary rRNA binding proteins, it binds directly to 16S rRNA central domain where it helps coordinate assembly of the platform of the 30S subunit. In Thermosynechococcus vestitus (strain NIES-2133 / IAM M-273 / BP-1), this protein is Small ribosomal subunit protein uS8.